Consider the following 119-residue polypeptide: Fluoride-specific ion channel FluC (119 aa).

4 helical membrane-spanning segments follow: residues I5–A25, I30–F50, W59–L79, and I97–A117. Na(+) is bound by residues G69 and T72.

This sequence belongs to the fluoride channel Fluc/FEX (TC 1.A.43) family.

It is found in the cell inner membrane. It catalyses the reaction fluoride(in) = fluoride(out). With respect to regulation, na(+) is not transported, but it plays an essential structural role and its presence is essential for fluoride channel function. Fluoride-specific ion channel. Important for reducing fluoride concentration in the cell, thus reducing its toxicity. In Neisseria meningitidis serogroup B (strain ATCC BAA-335 / MC58), this protein is Fluoride-specific ion channel FluC.